Reading from the N-terminus, the 298-residue chain is Calcium-binding protein 1 (298 aa).

Basic and acidic residues predominate over residues 1 to 10 (MSSHIAKSES). The disordered stretch occupies residues 1-131 (MSSHIAKSES…APAGTPEADP (131 aa)). A lipid anchor (N-myristoyl glycine) is attached at serine 2. Histidine 4 carries the S-palmitoyl cysteine lipid modification. Residues 11 to 25 (KTSLLKAAAASGGSR) are compositionally biased toward low complexity. 4 EF-hand domains span residues 153–188 (EEIE…MGYM), 207–224 (GHVD…KLLA), 230–265 (IGVK…LLGH), and 267–298 (VGHR…MMSR). Aspartate 166, aspartate 168, aspartate 170, tyrosine 172, and aspartate 177 together coordinate Ca(2+). Ca(2+)-binding residues include aspartate 243, asparagine 245, aspartate 247, and glutamate 249. Residue serine 251 is modified to Phosphoserine. 6 residues coordinate Ca(2+): glutamate 254, aspartate 280, asparagine 282, aspartate 284, arginine 286, and glutamate 291.

As to quaternary structure, interacts with ITPR1, ITPR2 and ITPR3. The strength of this interaction inversely correlates with calcium concentration. Interacts with CACNA1A (via C-terminal CDB motif) in the pre- and postsynaptic membranes. Interacts with CACNA1C. Interacts with CACNA1D. Interacts (via EF-hands 1 and 2) at microtubules with MAP1LC3B. Interacts (via EF-hands 1 and 2) with NSMF (via the central NLS-containing motif region), the interaction occurs in a calcium dependent manner after synaptic NMDA receptor stimulation and prevents nuclear import of NSMF. Interacts with MYO1C and TRPC5. Interacts with SPACA9. Phosphorylated. The phosphorylation regulates the activity. As to expression, somatodendritic compartment of neurons. Restricted expression in retina to a subpopulation of amacrine, bipolar, and ganglion cells. According to PubMed:11906216, expression is heterogeneous within brain regions and their major cell types and does not match with those of marker proteins for characterized neuronal subpopulations. Isoform 2: Minor isoform expressed in the brain, in the granule cell layer of the cerebellum, at low level. Not developmentally regulated. Isoform 3: Minor isoform expressed in the brain, in the granule cell layer. of the cerebellum, at low level. Not developmentally regulated.

The protein localises to the cytoplasm. Its subcellular location is the cytoskeleton. Its function is as follows. Modulates calcium-dependent activity of inositol 1,4,5-triphosphate receptors (ITPRs). Inhibits agonist-induced intracellular calcium signaling. Enhances inactivation and does not support calcium-dependent facilitation of voltage-dependent P/Q-type calcium channels. Causes calcium-dependent facilitation and inhibits inactivation of L-type calcium channels by binding to the same sites as calmodulin in the C-terminal domain of CACNA1C, but has an opposite effect on channel function. Suppresses the calcium-dependent inactivation of CACNA1D. Inhibits TRPC5 channels. Prevents NMDA receptor-induced cellular degeneration. Required for the normal transfer of light signals through the retina. The polypeptide is Calcium-binding protein 1 (Cabp1) (Rattus norvegicus (Rat)).